Here is a 134-residue protein sequence, read N- to C-terminus: uncharacterized protein (134 aa).

The protein belongs to the ycf68 family.

The protein localises to the plastid. It is found in the chloroplast. This is an uncharacterized protein from Saccharum hybrid (Sugarcane).